Reading from the N-terminus, the 309-residue chain is Foldase protein PrsA 2 (309 aa).

The N-terminal stretch at 1-22 (MKQMNKLITGVVTLATVVTLSA) is a signal peptide. A lipid anchor (N-palmitoyl cysteine) is attached at cysteine 23. Residue cysteine 23 is the site of S-diacylglycerol cysteine attachment. Residues 146–241 (TPTMTAEIMQ…RTYHIIKVTK (96 aa)) form the PpiC domain.

It belongs to the PrsA family.

The protein localises to the cell membrane. The enzyme catalyses [protein]-peptidylproline (omega=180) = [protein]-peptidylproline (omega=0). Its function is as follows. Plays a major role in protein secretion by helping the post-translocational extracellular folding of several secreted proteins. In Streptococcus pyogenes serotype M1, this protein is Foldase protein PrsA 2 (prsA2).